We begin with the raw amino-acid sequence, 115 residues long: MNLYTVIFINILLSLTLILVAFWLPQMNLYSEKANPYECGFDPTSSARLPFSMKFFLVAITFLLFDLEIALLLPLPWAIQTIKTSTMMIMAFILVTILSLGLAYEWTQKGLEWTE.

The next 3 helical transmembrane spans lie at 3–23 (LYTV…VAFW), 55–75 (FFLV…LLPL), and 86–106 (TMMI…AYEW).

It belongs to the complex I subunit 3 family. In terms of assembly, core subunit of respiratory chain NADH dehydrogenase (Complex I) which is composed of 45 different subunits. Interacts with TMEM186. Interacts with TMEM242.

Its subcellular location is the mitochondrion inner membrane. The enzyme catalyses a ubiquinone + NADH + 5 H(+)(in) = a ubiquinol + NAD(+) + 4 H(+)(out). In terms of biological role, core subunit of the mitochondrial membrane respiratory chain NADH dehydrogenase (Complex I) which catalyzes electron transfer from NADH through the respiratory chain, using ubiquinone as an electron acceptor. Essential for the catalytic activity of complex I. This Mus musculus (Mouse) protein is NADH-ubiquinone oxidoreductase chain 3.